Consider the following 217-residue polypeptide: Imidazole glycerol phosphate synthase subunit HisH (217 aa).

The region spanning 6–214 (QIAVVDYDMG…VTQVAAAQLQ (209 aa)) is the Glutamine amidotransferase type-1 domain. Cysteine 84 acts as the Nucleophile in catalysis. Catalysis depends on residues histidine 189 and glutamate 191.

As to quaternary structure, heterodimer of HisH and HisF.

The protein resides in the cytoplasm. It catalyses the reaction 5-[(5-phospho-1-deoxy-D-ribulos-1-ylimino)methylamino]-1-(5-phospho-beta-D-ribosyl)imidazole-4-carboxamide + L-glutamine = D-erythro-1-(imidazol-4-yl)glycerol 3-phosphate + 5-amino-1-(5-phospho-beta-D-ribosyl)imidazole-4-carboxamide + L-glutamate + H(+). The enzyme catalyses L-glutamine + H2O = L-glutamate + NH4(+). It functions in the pathway amino-acid biosynthesis; L-histidine biosynthesis; L-histidine from 5-phospho-alpha-D-ribose 1-diphosphate: step 5/9. In terms of biological role, IGPS catalyzes the conversion of PRFAR and glutamine to IGP, AICAR and glutamate. The HisH subunit catalyzes the hydrolysis of glutamine to glutamate and ammonia as part of the synthesis of IGP and AICAR. The resulting ammonia molecule is channeled to the active site of HisF. This is Imidazole glycerol phosphate synthase subunit HisH from Synechococcus sp. (strain ATCC 27144 / PCC 6301 / SAUG 1402/1) (Anacystis nidulans).